Consider the following 1582-residue polypeptide: MIPNSSAGGQSWGHPLRNVDNDTARGDTSQAFNRPDIRSEGQQYTPALPRHPGQPAVIDLTSSANDAQEGQPPAKRLKLDITAESSANPASPTPATTGDSRVTPGIANSKPSALSWRGRPVWSFQAMISEVMSGAEATEEDAILAPQGKRPASPPPFPQPSWKGAPPEQFGSNATKASESDSSKKVQTTPFRVEVPSIAPALKGDKVADFAPWIGNHPEDILSEQTVKQGHYDRTQVSQNESNTARPSLYAQLKHRSGLQMLSSVFMAALEKRQNHNTINVPSNFKPPPRVTLTDNKREAWLRDLANPSVPLRRLSRTIPHGIRGKNLLDQCLSKWIPVNRAVWLVKCVGANEIRACKRKGTGGTLVVGSEVKWVRDWTSGVQQFLEGVIGACGSADWKSKMTYATSLTARLFFERLLDHDQYFAWFLTSLEGASLNMVPVWLLMLGIYWDSMLRYRKRGRRLAEVLLGKLHQTTELQRPTLLQPLAERLSCCIRKLVLEHTSSLILPNSWETHRDLILSCLNMKETADKTIFDSLAERNSRIQLPSSRSDSTRQSAHQRVIQLFDSIQSSQDIASTSVACLNALEDRQTLVIKLLEWSATSFRSGLHRVYTAARLLRKWKISGVDIDTYIISFLSTVQDLAQLDMDNVYHIISELVRSQTFSVSRYLQWLMAKGVARKSSGTSGEVLAADARLLTQLPMSRSPEHVRNLRLTLLARAGVSVDEESSTIKCLKSSISQRLPNIFEVEASNSKHINFSKHDLTWAVKSEVSMWIRQGVVKHLKDTTRISALTPGEFYCVREILERFGDCSILADVLKQAIECDDNIILASVSDTVNYHFDALSMIGATSDLFRGLVGSYARLKRSGNLSLDFVFSLIELGLRLPDESGTVYLLRQDLARIESKSALAAPSPLSDHIPTTFNEVDASFQERLEQLLSCGNGLDESTMGAIISSLTKILTDGGGAAKVSAKDACRYLAYLRPFNPKYLDGMLVRYVYGLLKSSSRPTMSQVLSPLIGVGCVTIHSFVLLVNKLSASAQTTGAIANPDSLRLDILELLLPQEESSADMVTYRFRLAQQEFLVKYPEETLNIISDAIPLFDADFHDANLGSRRPDLPACTVVLLRTLLAQNSSLVLKYCMQKLDGHSSFTTVLGKAVDILLGLDPEDEMEPSSQAERVILMNNDFSLPYCQLKLKLLFNAKAGNEVKNHIVDVMFKAAVTDSRSKRSHWVGLVSLMDQEAARQIRERAEGCFFSVAMFDESMDDTSLPSGASSLSSIESAKLYLNIIEKLAYSIPQAGVQSIPPLLVERLDLLLQKLIIMQINSNSVAASSSGSTIVSKINFERALAFWFSALLRLIVLHRAAFNVPPASGSKVDSLREQTRLLVSILCISLARLPENILRLFPAADYFPHTIQSHNFRPCPGILLQTHALDVAASLIDSFPDEARHQCVRFLRERCPPFLKFQNDRRFLYLLGPMTDTTIPSSQLSASISSPAAGGSTPTPIPSGTLSGGHSSQATQQMAALTGPFSGLSENTKLVADRLRIQNGGRINGPYPVRPWELLEDAAPILGVNDTAVSLKLFDARRVRA.

Disordered stretches follow at residues 1-114 (MIPN…PSAL), 146-189 (PQGK…VQTT), and 1479-1512 (SQLS…SQAT). Residues 83 to 100 (AESSANPASPTPATTGDS) show a composition bias toward polar residues. Positions 1479–1493 (SQLSASISSPAAGGS) are enriched in low complexity. Residues 1499-1512 (PSGTLSGGHSSQAT) are compositionally biased toward polar residues.

The protein belongs to the Mediator complex subunit 12 family. Component of the srb8-11 complex, which itself associates with the Mediator complex.

It is found in the nucleus. In terms of biological role, component of the srb8-11 complex. The srb8-11 complex is a regulatory module of the Mediator complex which is itself involved in regulation of basal and activated RNA polymerase II-dependent transcription. The srb8-11 complex may be involved in the transcriptional repression of a subset of genes regulated by Mediator. It may inhibit the association of the Mediator complex with RNA polymerase II to form the holoenzyme complex. The protein is Mediator of RNA polymerase II transcription subunit 12 (srb8) of Emericella nidulans (strain FGSC A4 / ATCC 38163 / CBS 112.46 / NRRL 194 / M139) (Aspergillus nidulans).